Consider the following 75-residue polypeptide: Lipid-anchored plasma membrane protein CPP2 (75 aa).

The segment at 1–43 (MSQQQGYYQQGPPQQGYYQQGPPQQGYYQQGPPQQGYPQQQPV) is disordered. Tandem repeats lie at residues 4–13 (QQGYYQQGPP), 14–23 (QQGYYQQGPP), and 24–33 (QQGYYQQGPP). A 3 X 10 AA tandem repeats of Q-Q-G-Y-Y-Q-Q-G-P-P region spans residues 4-33 (QQGYYQQGPPQQGYYQQGPPQQGYYQQGPP).

It belongs to the CYSTM1 family. Post-translationally, palmitoylated near the C-terminus.

The protein localises to the cell membrane. This chain is Lipid-anchored plasma membrane protein CPP2, found in Saccharomyces cerevisiae (strain ATCC 204508 / S288c) (Baker's yeast).